The following is a 583-amino-acid chain: uncharacterized protein (583 aa).

The FAD-binding FR-type domain maps to 162 to 424; the sequence is YGIFAAPILD…RGVQQNPFAK (263 aa).

It belongs to the flavoprotein pyridine nucleotide cytochrome reductase family. The cofactor is FAD.

It is found in the mitochondrion. This is an uncharacterized protein from Schizosaccharomyces pombe (strain 972 / ATCC 24843) (Fission yeast).